The chain runs to 404 residues: Cysteine desulfurase IscS (404 aa).

Residues A75–T76, N155, Q183, and S203–H205 each bind pyridoxal 5'-phosphate. Position 206 is an N6-(pyridoxal phosphate)lysine (K206). T243 is a pyridoxal 5'-phosphate binding site. Residue C328 is the Cysteine persulfide intermediate of the active site. A [2Fe-2S] cluster-binding site is contributed by C328.

This sequence belongs to the class-V pyridoxal-phosphate-dependent aminotransferase family. NifS/IscS subfamily. In terms of assembly, homodimer. Forms a heterotetramer with IscU, interacts with other sulfur acceptors. Pyridoxal 5'-phosphate serves as cofactor.

The protein localises to the cytoplasm. It carries out the reaction (sulfur carrier)-H + L-cysteine = (sulfur carrier)-SH + L-alanine. The protein operates within cofactor biosynthesis; iron-sulfur cluster biosynthesis. Functionally, master enzyme that delivers sulfur to a number of partners involved in Fe-S cluster assembly, tRNA modification or cofactor biosynthesis. Catalyzes the removal of elemental sulfur atoms from cysteine to produce alanine. Functions as a sulfur delivery protein for Fe-S cluster synthesis onto IscU, an Fe-S scaffold assembly protein, as well as other S acceptor proteins. This is Cysteine desulfurase IscS from Shewanella halifaxensis (strain HAW-EB4).